Here is a 265-residue protein sequence, read N- to C-terminus: Zinc import ATP-binding protein ZnuC (265 aa).

Positions 6–221 constitute an ABC transporter domain; the sequence is IRLEQVAVTL…PAFVELFGKN (216 aa). Residue 38 to 45 coordinates ATP; the sequence is GPNGAGKT. The tract at residues 245–265 is disordered; it reads DAPATSSHTHTHVHGDHCKHG.

This sequence belongs to the ABC transporter superfamily. Zinc importer (TC 3.A.1.15.5) family. The complex is composed of two ATP-binding proteins (ZnuC), two transmembrane proteins (ZnuB) and a solute-binding protein (ZnuA).

It is found in the cell inner membrane. The catalysed reaction is Zn(2+)(out) + ATP(in) + H2O(in) = Zn(2+)(in) + ADP(in) + phosphate(in) + H(+)(in). Its function is as follows. Part of the ABC transporter complex ZnuABC involved in zinc import. Responsible for energy coupling to the transport system. This chain is Zinc import ATP-binding protein ZnuC, found in Pseudomonas savastanoi pv. phaseolicola (strain 1448A / Race 6) (Pseudomonas syringae pv. phaseolicola (strain 1448A / Race 6)).